We begin with the raw amino-acid sequence, 544 residues long: MAKRIIYNEQARRALERGIDILAESVAVTLGPKGRNVVLEKKFGAPQIINDGVTIAKEIELEDHIENTGVALIRQAASKTNDAAGDGTTTATVLAHAMVKAGLRNVAAGANAISLKKGIDKASDFLVSKIEELAKPISDSNAIAQCGTIAAGNDEEVGQMIADAMDKVGKEGVISLEEGKSMTTELEVTEGMRFDKGYISPYFATDTERMEAVLDEPYILLTDKKIGLVQDLVPVLEQIARTGKPLLIIAEDIEKEALATLVVNRLRGVLNVAAVKAPGFGDRRKAMLEDMAVLTNGQLITEDAGLKLDNAKLEMLGTARRVTINKDTTTIVAEGNETAVKGRCEQIKKQMDETDSTYDKEKLQERLAKLAGGVAVVKVGAATETEMKDKKLRLEDAINATKAAVEEGIVPGGGTTLTHLASDLQKWANSNLSGEELIGSNIVEASLAAPLMRIAENAGANGAVVAENVKSRPISDGYNAATGDYIDMLAAGIVDPAKVTRSGLQNAASIAGMVLTTECIVADLPEKKEAAPAGGGGMGGDFDY.

ATP is bound by residues 29–32, 86–90, Gly-413, 479–481, and Asp-495; these read TLGP, DGTTT, and NAA.

The protein belongs to the chaperonin (HSP60) family. Forms a cylinder of 14 subunits composed of two heptameric rings stacked back-to-back. Interacts with the co-chaperonin GroES.

It localises to the cytoplasm. The catalysed reaction is ATP + H2O + a folded polypeptide = ADP + phosphate + an unfolded polypeptide.. Together with its co-chaperonin GroES, plays an essential role in assisting protein folding. The GroEL-GroES system forms a nano-cage that allows encapsulation of the non-native substrate proteins and provides a physical environment optimized to promote and accelerate protein folding. This Prochlorococcus marinus (strain MIT 9313) protein is Chaperonin GroEL 2.